Consider the following 1048-residue polypeptide: Integrin alpha-V (1048 aa).

An N-terminal signal peptide occupies residues Met1–Ala30. At Phe31 to Val992 the chain is on the extracellular side. FG-GAP repeat units lie at residues Asn32–Gln98, Asp109–Ala170, Arg173–Tyr225, Gln237–Met291, Ser292–Gln357, Thr358–Ala415, and Gln419–Ser482. Residue Asn74 is glycosylated (N-linked (GlcNAc...) asparagine). 3 disulfide bridges follow: Cys89–Cys97, Cys138–Cys158, and Cys172–Cys185. Ca(2+)-binding residues include Asp260, Asn262, Asp264, Ile266, and Asp268. 2 N-linked (GlcNAc...) asparagine glycosylation sites follow: Asn290 and Asn296. Residues Asp314, Asn316, Asp318, Tyr320, Asp322, Asp379, Asp381, Asp383, Phe385, Asp387, Asp443, Asp445, Asn447, Tyr449, and Asp451 each contribute to the Ca(2+) site. Asn488 carries an N-linked (GlcNAc...) asparagine glycan. 2 disulfides stabilise this stretch: Cys491-Cys502 and Cys508-Cys565. N-linked (GlcNAc...) asparagine glycosylation is found at Asn554 and Asn615. Intrachain disulfides connect Cys626-Cys632 and Cys698-Cys711. Asn704, Asn835, Asn851, and Asn874 each carry an N-linked (GlcNAc...) asparagine glycan. 2 cysteine pairs are disulfide-bonded: Cys852–Cys914 and Cys904–Cys909. 3 N-linked (GlcNAc...) asparagine glycosylation sites follow: Asn945, Asn973, and Asn980. A helical membrane pass occupies residues Pro993–Tyr1016. Residues Arg1017–Thr1048 are Cytoplasmic-facing. Positions Gly1019–Arg1023 match the GFFKR motif motif. The segment covering Pro1027–Gly1042 has biased composition (basic and acidic residues). The tract at residues Pro1027–Thr1048 is disordered.

Belongs to the integrin alpha chain family. In terms of assembly, heterodimer of an alpha and a beta subunit. The alpha subunit is composed of a heavy and a light chain linked by a disulfide bond. Alpha-V (ITGAV) associates with either beta-1 (ITGB1), beta-3 (ITGB3), beta-5 (ITGB5), beta-6 (ITGB6) or beta-8 (ITGB8). Interacts with RAB25. Interacts with CIB1. Integrins ITGAV:ITGB3 and ITGAV:ITGB5 interact with FBLN5 (via N-terminus). ITGAV:ITGB3 and ITGAV:ITGB5 interact with CCN3. ITGAV:ITGB3 interacts with ADGRA2. ITGAV:ITGB3 interacts with FGF2; it is likely that FGF2 can simultaneously bind ITGAV:ITGB3 and FGF receptors. ITGAV:ITGB3 interacts with SELP (via C-type lectin domain); the interaction mediates cell-cell interaction and adhesion. ITGAV:ITGB3 is found in a ternary complex with CX3CR1 and CX3CL1. ITGAV:ITGB3 is found in a ternary complex with NRG1 and ERBB3. ITGAV:ITGB3 is found in a ternary complex with FGF1 and FGFR1. ITGAV:ITGB3 is found in a ternary complex with IGF1 and IGF1R. ITGAV:ITGB3 interacts with IGF2. ITGAV:ITGB3 and ITGAV:ITGB6 interact with FBN1. ITGAV:ITGB3 interacts with CD9, CD81 and CD151 (via second extracellular domain). ITGAV:ITGB6 interacts with TGFB1. ITGAV:ITGB3 interacts with PTN. Forms a complex with PTPRZ1 and PTN that stimulates endothelial cell migration through ITGB3 'Tyr-773' phosphorylation. Interacts with TM4SF19. As to quaternary structure, (Microbial infection) Alpha-V/beta-6 and alpha-V/beta-3 bind to foot-and-mouth disease virus (FMDV) VP1 protein and acts as a receptor for this virus.

The protein localises to the cell membrane. It is found in the cell junction. It localises to the focal adhesion. In terms of biological role, the alpha-V (ITGAV) integrins are receptors for vitronectin, cytotactin, fibronectin, fibrinogen, laminin, matrix metalloproteinase-2, osteopontin, osteomodulin, prothrombin, thrombospondin, TGFB1 and vWF. They recognize the sequence R-G-D in a wide array of ligands. Alpha-V integrins may play a role in embryo implantation, angiogenesis and wound healing. ITGAV:ITGB3 binds to fractalkine (CX3CL1) and may act as its coreceptor in CX3CR1-dependent fractalkine signaling. ITGAV:ITGB3 binds to NRG1 (via EGF domain) and this binding is essential for NRG1-ERBB signaling. ITGAV:ITGB3 binds to FGF1 and this binding is essential for FGF1 signaling. ITGAV:ITGB3 binds to FGF2 and this binding is essential for FGF2 signaling. ITGAV:ITGB3 binds to IGF1 and this binding is essential for IGF1 signaling. ITGAV:ITGB3 binds to IGF2 and this binding is essential for IGF2 signaling. ITGAV:ITGB3 binds to IL1B and this binding is essential for IL1B signaling. ITGAV:ITGB3 binds to PLA2G2A via a site (site 2) which is distinct from the classical ligand-binding site (site 1) and this induces integrin conformational changes and enhanced ligand binding to site 1. ITGAV:ITGB3 and ITGAV:ITGB6 act as receptors for fibrillin-1 (FBN1) and mediate R-G-D-dependent cell adhesion to FBN1. Integrin alpha-V/beta-6 or alpha-V/beta-8 (ITGAV:ITGB6 or ITGAV:ITGB8) mediates R-G-D-dependent release of transforming growth factor beta-1 (TGF-beta-1) from regulatory Latency-associated peptide (LAP), thereby playing a key role in TGF-beta-1 activation. ITGAV:ITGB3 acts as a receptor for CD40LG. ITGAV:ITGB3 acts as a receptor for IBSP and promotes cell adhesion and migration to IBSP. The protein is Integrin alpha-V (ITGAV) of Bos taurus (Bovine).